Consider the following 546-residue polypeptide: CTP synthase (546 aa).

The segment at 1-266 (MTTNYIFVTG…DDLVCQRFGI (266 aa)) is amidoligase domain. Ser14 serves as a coordination point for CTP. Residue Ser14 coordinates UTP. ATP is bound by residues 15–20 (SLGKGI) and Asp72. The Mg(2+) site is built by Asp72 and Glu140. Residues 147 to 149 (DIE), 187 to 192 (KTKPTQ), and Lys223 each bind CTP. Residues 187–192 (KTKPTQ) and Lys223 contribute to the UTP site. Residue 239–241 (KDV) coordinates ATP. A Glutamine amidotransferase type-1 domain is found at 291–542 (TIGMVGKYIE…VKAAGENARG (252 aa)). Gly352 provides a ligand contact to L-glutamine. The active-site Nucleophile; for glutamine hydrolysis is Cys379. L-glutamine contacts are provided by residues 380–383 (LGMQ), Glu403, and Arg470. Catalysis depends on residues His515 and Glu517.

The protein belongs to the CTP synthase family. As to quaternary structure, homotetramer.

The enzyme catalyses UTP + L-glutamine + ATP + H2O = CTP + L-glutamate + ADP + phosphate + 2 H(+). The catalysed reaction is L-glutamine + H2O = L-glutamate + NH4(+). It carries out the reaction UTP + NH4(+) + ATP = CTP + ADP + phosphate + 2 H(+). It functions in the pathway pyrimidine metabolism; CTP biosynthesis via de novo pathway; CTP from UDP: step 2/2. Its activity is regulated as follows. Allosterically activated by GTP, when glutamine is the substrate; GTP has no effect on the reaction when ammonia is the substrate. The allosteric effector GTP functions by stabilizing the protein conformation that binds the tetrahedral intermediate(s) formed during glutamine hydrolysis. Inhibited by the product CTP, via allosteric rather than competitive inhibition. Catalyzes the ATP-dependent amination of UTP to CTP with either L-glutamine or ammonia as the source of nitrogen. Regulates intracellular CTP levels through interactions with the four ribonucleotide triphosphates. In Aliivibrio salmonicida (strain LFI1238) (Vibrio salmonicida (strain LFI1238)), this protein is CTP synthase.